The following is a 67-amino-acid chain: Ceratotoxin-C (67 aa).

An N-terminal signal peptide occupies residues 1–23; it reads MANIKAVFLICIVAFIAFHCVVA. Residues 24-35 constitute a propeptide that is removed on maturation; the sequence is EPTAEDSVVVKR.

In terms of assembly, homomer of four to six subunits.

The protein resides in the secreted. Functionally, female-specific peptides with potent activity against Gram-positive and Gram-negative bacteria. They have as well hemolytic activity. This chain is Ceratotoxin-C (CTXC1), found in Ceratitis capitata (Mediterranean fruit fly).